The primary structure comprises 389 residues: Protein P4 (389 aa).

This is Protein P4 from Rice tungro bacilliform virus (isolate Philippines) (RTBV).